The sequence spans 979 residues: DNA ligase 4 (979 aa).

Residues 1–39 (MDSDEIMPDEEHPNVPVGDEESDIDEKYPNRPRNHSPTL) form a disordered region. Glutamate 320, lysine 322, leucine 323, arginine 327, glutamate 389, phenylalanine 430, glutamate 490, lysine 495, lysine 512, and lysine 514 together coordinate ATP. Lysine 322 acts as the N6-AMP-lysine intermediate in catalysis. Residue glutamate 389 coordinates Mg(2+). Residue glutamate 490 participates in Mg(2+) binding. 2 consecutive BRCT domains span residues 721–814 (PSGH…PDFL) and 867–965 (LQES…RFQP).

Belongs to the ATP-dependent DNA ligase family. It depends on Mg(2+) as a cofactor.

It localises to the nucleus. The enzyme catalyses ATP + (deoxyribonucleotide)n-3'-hydroxyl + 5'-phospho-(deoxyribonucleotide)m = (deoxyribonucleotide)n+m + AMP + diphosphate.. Its function is as follows. DNA ligase involved in DNA non-homologous end joining (NHEJ); required for double-strand break (DSB) repair. In Aspergillus fumigatus (strain ATCC MYA-4609 / CBS 101355 / FGSC A1100 / Af293) (Neosartorya fumigata), this protein is DNA ligase 4 (lig4).